The primary structure comprises 491 residues: Feruloyl-CoA synthase (491 aa).

Residue T154 participates in Mg(2+) binding. 3 residues coordinate ATP: A199, G291, and T295. E296 provides a ligand contact to Mg(2+). 2 residues coordinate ATP: D374 and K391.

Belongs to the ATP-dependent AMP-binding enzyme family. It depends on Mg(2+) as a cofactor.

The enzyme catalyses (E)-ferulate + ATP + CoA = (E)-feruloyl-CoA + AMP + diphosphate. Catalyzes the formation of (E)-feruloyl-CoA, AMP and diphosphate from (E)-ferulate, CoA and ATP. Involved in the degradation pathway of lignin-derived aromatic compounds of plant cell walls. Catalyzes the first enzymatic step in the conversion of ferulic acid into high value compound vanillin. The protein is Feruloyl-CoA synthase of Amycolatopsis sp.